The following is a 387-amino-acid chain: Ferrochelatase (387 aa).

Fe cation contacts are provided by His-196 and Glu-277.

Belongs to the ferrochelatase family.

It is found in the cytoplasm. The enzyme catalyses heme b + 2 H(+) = protoporphyrin IX + Fe(2+). The protein operates within porphyrin-containing compound metabolism; protoheme biosynthesis; protoheme from protoporphyrin-IX: step 1/1. Functionally, catalyzes the ferrous insertion into protoporphyrin IX. This chain is Ferrochelatase, found in Synechococcus sp. (strain RCC307).